A 172-amino-acid chain; its full sequence is C-phycocyanin beta subunit (172 aa).

Asn-72 carries the post-translational modification N4-methylasparagine. Residues Cys-82 and Cys-153 each coordinate (2R,3E)-phycocyanobilin.

It belongs to the phycobiliprotein family. In terms of assembly, heterodimer of an alpha and a beta chain, which further assembles into trimers. The trimers assemble into hexamers, although these were not seen in the crystallographic studies. Part of 2 PBS rod complexes, the conventional CpcG-PBS rod and a photosystem I-specific CpcL-PBS rod, both of which include ferredoxin--NADP reductase (petH). Interacts with rod linker CpcC2 via the latter's N-terminal PBS-linker domain. In terms of processing, contains two covalently linked bilin chromophores.

It is found in the cellular thylakoid membrane. Functionally, light-harvesting photosynthetic bile pigment-protein from the phycobiliprotein complex (phycobilisome, PBS). Phycocyanin is the major phycobiliprotein in the PBS rod. This is C-phycocyanin beta subunit (cpcB) from Synechocystis sp. (strain ATCC 27184 / PCC 6803 / Kazusa).